The following is a 141-amino-acid chain: Small ribosomal subunit protein uS8c (141 aa).

It belongs to the universal ribosomal protein uS8 family. In terms of assembly, part of the 30S ribosomal subunit.

The protein resides in the plastid. It localises to the chloroplast. One of the primary rRNA binding proteins, it binds directly to 16S rRNA central domain where it helps coordinate assembly of the platform of the 30S subunit. This is Small ribosomal subunit protein uS8c (rps8) from Pleurastrum terricola (Filamentous green alga).